A 179-amino-acid chain; its full sequence is tRNA (cytidine(56)-2'-O)-methyltransferase (179 aa).

S-adenosyl-L-methionine contacts are provided by residues Leu-82, 112–116 (GAEKV), and 130–137 (VGNQPHSE).

The protein belongs to the aTrm56 family. As to quaternary structure, homodimer.

It localises to the cytoplasm. It catalyses the reaction cytidine(56) in tRNA + S-adenosyl-L-methionine = 2'-O-methylcytidine(56) in tRNA + S-adenosyl-L-homocysteine + H(+). In terms of biological role, specifically catalyzes the AdoMet-dependent 2'-O-ribose methylation of cytidine at position 56 in tRNAs. The chain is tRNA (cytidine(56)-2'-O)-methyltransferase from Methanococcus maripaludis (strain C7 / ATCC BAA-1331).